Reading from the N-terminus, the 84-residue chain is uncharacterized protein (84 aa).

The helical transmembrane segment at Thr13 to Leu35 threads the bilayer. Residues Leu41 to Lys84 are a coiled coil.

It localises to the host membrane. This is an uncharacterized protein from Sulfolobus islandicus rod-shaped virus 1 (SIRV-1).